The chain runs to 287 residues: Large ribosomal subunit protein uL2 (287 aa).

The disordered stretch occupies residues 220-287; that stretch reads VRGSVMNPCD…SKRSRGGRDS (68 aa). Over residues 271 to 287 the composition is skewed to basic residues; sequence VRRRRRISKRSRGGRDS.

This sequence belongs to the universal ribosomal protein uL2 family. In terms of assembly, part of the 50S ribosomal subunit. Forms a bridge to the 30S subunit in the 70S ribosome.

In terms of biological role, one of the primary rRNA binding proteins. Required for association of the 30S and 50S subunits to form the 70S ribosome, for tRNA binding and peptide bond formation. It has been suggested to have peptidyltransferase activity; this is somewhat controversial. Makes several contacts with the 16S rRNA in the 70S ribosome. The chain is Large ribosomal subunit protein uL2 from Prochlorococcus marinus (strain MIT 9515).